The sequence spans 96 residues: uncharacterized protein (96 aa).

The next 3 helical transmembrane spans lie at 14–34 (FIEGMSLLILLFIAMPLKYWA), 38–58 (LAVTIVGSVHGGLFILYLLVL), and 67–87 (WPLKWSAAGFIAAFVPFGNFL).

It is found in the cell membrane. This is an uncharacterized protein from Bacillus subtilis (strain 168).